Here is a 243-residue protein sequence, read N- to C-terminus: MIGIIGGTHILEIKVLKDVEETRIETPYGTAEIDVGRVDGIDVAIIQRHGKRKDKPPHRINHAANFYALKSLGVKYVIGMGSVGALREEYSLPSLIIPHDYIDFFSGVTIYNDSLVHVTPGFDEYLREVLVEVARKISSFPVIDKGVYFQTRGPRLETKAEIAMIKSFADCVGMTAGSEATIARELGLSYAIVCTMDNYAHGIKNQSIDYREIVEKAKENARECLKIVEEAVKKVWEEKIQRT.

Phosphate-binding positions include threonine 8 and 48-49; that span reads RH. Methionine 174 contributes to the substrate binding site. Threonine 175 provides a ligand contact to phosphate. 198–200 serves as a coordination point for substrate; it reads NYA.

The protein belongs to the PNP/MTAP phosphorylase family. MTAP subfamily. In terms of assembly, homohexamer. Dimer of a homotrimer.

It carries out the reaction a purine D-ribonucleoside + phosphate = a purine nucleobase + alpha-D-ribose 1-phosphate. Its pathway is purine metabolism; purine nucleoside salvage. Its function is as follows. Purine nucleoside phosphorylase which is highly specific for 6-oxopurine nucleosides. Cleaves guanosine or inosine to respective bases and sugar-1-phosphate molecules. Involved in purine salvage. In Archaeoglobus fulgidus (strain ATCC 49558 / DSM 4304 / JCM 9628 / NBRC 100126 / VC-16), this protein is Probable 6-oxopurine nucleoside phosphorylase.